The primary structure comprises 145 residues: UPF0735 ACT domain-containing protein CLH_2637 (145 aa).

An ACT domain is found at 69–144; it reads TFNLIVKDQT…YVEKIEFVAM (76 aa).

The protein belongs to the UPF0735 family.

This is UPF0735 ACT domain-containing protein CLH_2637 from Clostridium botulinum (strain Alaska E43 / Type E3).